Here is a 113-residue protein sequence, read N- to C-terminus: Large ribosomal subunit protein bL19 (113 aa).

The protein belongs to the bacterial ribosomal protein bL19 family.

In terms of biological role, this protein is located at the 30S-50S ribosomal subunit interface and may play a role in the structure and function of the aminoacyl-tRNA binding site. The polypeptide is Large ribosomal subunit protein bL19 (Rhodococcus jostii (strain RHA1)).